The sequence spans 304 residues: MPQQLSPINIETKKAISNARLKPLDIHYNESKPTTIQNTGKLVRINFKGGYISGGFLPNEYVLSSLHIYWGKEDDYGSNHLIDVYKYSGEINLVHWNKKKYSSYEEAKKHDDGLIIISIFLQVLDHKNVYFQKIVNQLDSIRSANTSAPFDSVFYLDNLLPSKLDYFTYLGTTINHSADAVWIIFPTPINIHSDQLSKFRTLLSSSNHDGKPHYITENYRNPYKLNDDTQVYYSGEIIRAATTSPARENYFMRWLSDLRETCFSYYQKYIEENKTFAIIAIVFVFILTAILFFMSRRYSREKQN.

The region spanning 1–235 (MPQQLSPINI…NDDTQVYYSG (235 aa)) is the Alpha-carbonic anhydrase domain. The Virion surface portion of the chain corresponds to 1–275 (MPQQLSPINI…YQKYIEENKT (275 aa)). A helical membrane pass occupies residues 276–294 (FAIIAIVFVFILTAILFFM). Over 295 to 304 (SRRYSREKQN) the chain is Intravirion.

This sequence belongs to the alpha-carbonic anhydrase family. Homodimer; disulfide-linked. In terms of processing, apparently non-glycosylated.

It localises to the virion membrane. Binds to chondroitin sulfate on the cell surface to provide virion attachment to target cell. The protein is Cell surface-binding protein OPG105 (OPG105) of Bos taurus (Bovine).